The chain runs to 211 residues: Interleukin-6 (211 aa).

The N-terminal stretch at 1–24 is a signal peptide; that stretch reads MKFLSARDFHPVAFLGLMLVTTTA. Disulfide bonds link cysteine 70-cysteine 76 and cysteine 99-cysteine 109.

Belongs to the IL-6 superfamily. Component of a hexamer of two molecules each of IL6, IL6R and IL6ST; first binds to IL6R to associate with the signaling subunit IL6ST. Interacts with IL6R (via the N-terminal ectodomain); this interaction may be affected by IL6R-binding with SORL1, hence decreasing IL6 cis signaling. Interacts with SORL1 (via the N-terminal ectodomain); this interaction leads to IL6 internalization and lysosomal degradation. May form a trimeric complex with the soluble SORL1 ectodomain and soluble IL6R receptor; this interaction might stabilize circulating IL6, hence promoting IL6 trans signaling. In terms of processing, N- and O-glycosylated. Expressed by dendritic cells and macrophages. Expressed by activated follicular B cells. Abundantly expressed in the central nervous system (CNS), particularly the hypothalamic region.

Its subcellular location is the secreted. Its function is as follows. Cytokine with a wide variety of biological functions in immunity, tissue regeneration, and metabolism. Binds to IL6R, then the complex associates to the signaling subunit IL6ST/gp130 to trigger the intracellular IL6-signaling pathway. The interaction with the membrane-bound IL6R and IL6ST stimulates 'classic signaling', whereas the binding of IL6 and soluble IL6R to IL6ST stimulates 'trans-signaling'. Alternatively, 'cluster signaling' occurs when membrane-bound IL6:IL6R complexes on transmitter cells activate IL6ST receptors on neighboring receiver cells. IL6 is a potent inducer of the acute phase response. Rapid production of IL6 contributes to host defense during infection and tissue injury, but excessive IL6 synthesis is involved in disease pathology. In the innate immune response, is synthesized by myeloid cells, such as macrophages and dendritic cells, upon recognition of pathogens through toll-like receptors (TLRs) at the site of infection or tissue injury. In the adaptive immune response, is required for the differentiation of B-cells into immunoglolin-secreting cells. Plays a major role in the differentiation of CD4(+) T cell subsets. Essential factor for the development of T follicular helper (Tfh) cells that are required for the induction of germinal-center formation. Together with IL21, controls the early generation of Tfh cells and are critical for an effective antibody response to acute viral infection. Required to drive naive CD4(+) T cells to the Th17 lineage, through 'cluster signaling' by dendritic cells. Also required for proliferation of myeloma cells and the survival of plasmablast cells. Functionally, acts as an essential factor in bone homeostasis and on vessels directly or indirectly by induction of VEGF, resulting in increased angiogenesis activity and vascular permeability. Induces, through 'trans-signaling' and synergistically with IL1B and TNF, the production of VEGF. Involved in metabolic controls, is discharged into the bloodstream after muscle contraction increasing lipolysis and improving insulin resistance. 'Trans-signaling' in central nervous system regulates energy and glucose homeostasis. Mediates, through GLP-1, crosstalk between insulin-sensitive tissues, intestinal L cells and pancreatic islets to adapt to changes in insulin demand. Also acts as a myokine. Plays a protective role during liver injury, being required for maintenance of tissue regeneration. Also has a pivotal role in iron metabolism by regulating HAMP/hepcidin expression upon inflammation or bacterial infection. Through activation of IL6ST-YAP-NOTCH pathway, induces inflammation-induced epithelial regeneration. This is Interleukin-6 from Mus musculus (Mouse).